Here is a 411-residue protein sequence, read N- to C-terminus: Serpin A3-5 (411 aa).

The signal sequence occupies residues 1-24 (MRAERTSFLLALGLLMAGIRSVHC). Residues Asn-100, Asn-180, Asn-230, Asn-264, and Asn-318 are each glycosylated (N-linked (GlcNAc...) asparagine).

It belongs to the serpin family. In terms of assembly, homodimer.

It is found in the cytoplasmic vesicle. The protein resides in the secretory vesicle. It localises to the chromaffin granule. The protein localises to the secreted. Serine protease inhibitor. The polypeptide is Serpin A3-5 (Bos taurus (Bovine)).